Reading from the N-terminus, the 1159-residue chain is WASH complex subunit 5 (1159 aa).

Belongs to the strumpellin family. Component of the WASH complex.

It localises to the early endosome. Functionally, acts at least in part as component of the WASH complex which seems to regulate washc1 nucleation-promoting factor (NPF) activity and is required for its membrane targeting during endosomal sorting. This Xenopus tropicalis (Western clawed frog) protein is WASH complex subunit 5.